A 57-amino-acid chain; its full sequence is Mambaquaretin-2 (57 aa).

One can recognise a BPTI/Kunitz inhibitor domain in the interval cysteine 5 to cysteine 55. Disulfide bonds link cysteine 5–cysteine 55, cysteine 14–cysteine 38, and cysteine 30–cysteine 51.

This sequence belongs to the venom Kunitz-type family. As to expression, expressed by the venom gland.

The protein localises to the secreted. Functionally, interacts with vasopressin V2 receptor (V2R/AVPR2), probably in a selective manner. Inhibits vasopressin binding human V2R in the nanomolar range (Ki=8.16 nM), and also moderately inhibits vasopressin-induced cAMP production (IC(50)=224 nM). In vivo, intraperitoneal injection of this protein into rats increases diuresis by 5.5-fold, without any loss of electrolytes. In Dendroaspis viridis (Western green mamba), this protein is Mambaquaretin-2.